Consider the following 141-residue polypeptide: Putative antiporter subunit mnhB2 (141 aa).

4 consecutive transmembrane segments (helical) span residues 10 to 30, 35 to 55, 70 to 90, and 114 to 134; these read TVTK…FFAG, GGGF…FLAF, ILMI…TFFG, and ITLF…TVML.

The protein belongs to the CPA3 antiporters (TC 2.A.63) subunit B family. May form a heterooligomeric complex that consists of seven subunits: mnhA2, mnhB2, mnhC2, mnhD2, mnhE2, mnhF2 and mnhG2.

The protein resides in the cell membrane. The protein is Putative antiporter subunit mnhB2 (mnhB2) of Staphylococcus aureus (strain MRSA252).